The primary structure comprises 198 residues: Probable GTP-binding protein EngB (198 aa).

The EngB-type G domain occupies 22 to 195 (DLPEIALAGR…WKAIHKFTKT (174 aa)). GTP contacts are provided by residues 30-37 (GRSNVGKS), 57-61 (GKTQT), 75-78 (DVPG), 142-145 (TKAD), and 174-176 (FSS). Mg(2+)-binding residues include serine 37 and threonine 59.

It belongs to the TRAFAC class TrmE-Era-EngA-EngB-Septin-like GTPase superfamily. EngB GTPase family. Mg(2+) is required as a cofactor.

Necessary for normal cell division and for the maintenance of normal septation. This Bacillus cereus (strain B4264) protein is Probable GTP-binding protein EngB.